Here is a 154-residue protein sequence, read N- to C-terminus: 6,7-dimethyl-8-ribityllumazine synthase (154 aa).

Residues Phe22, 56 to 58, and 80 to 82 each bind 5-amino-6-(D-ribitylamino)uracil; these read SFE and AVI. 85-86 contacts (2S)-2-hydroxy-3-oxobutyl phosphate; the sequence is ST. His88 functions as the Proton donor in the catalytic mechanism. Tyr113 contacts 5-amino-6-(D-ribitylamino)uracil. Arg127 is a binding site for (2S)-2-hydroxy-3-oxobutyl phosphate.

This sequence belongs to the DMRL synthase family. In terms of assembly, forms an icosahedral capsid composed of 60 subunits, arranged as a dodecamer of pentamers.

The enzyme catalyses (2S)-2-hydroxy-3-oxobutyl phosphate + 5-amino-6-(D-ribitylamino)uracil = 6,7-dimethyl-8-(1-D-ribityl)lumazine + phosphate + 2 H2O + H(+). Its pathway is cofactor biosynthesis; riboflavin biosynthesis; riboflavin from 2-hydroxy-3-oxobutyl phosphate and 5-amino-6-(D-ribitylamino)uracil: step 1/2. In terms of biological role, catalyzes the formation of 6,7-dimethyl-8-ribityllumazine by condensation of 5-amino-6-(D-ribitylamino)uracil with 3,4-dihydroxy-2-butanone 4-phosphate. This is the penultimate step in the biosynthesis of riboflavin. This is 6,7-dimethyl-8-ribityllumazine synthase from Persephonella marina (strain DSM 14350 / EX-H1).